The primary structure comprises 498 residues: Probable lysophospholipase BODYGUARD 3 (498 aa).

A signal peptide spans Met-1 to Tyr-55. The N-palmitoyl cysteine moiety is linked to residue Cys-56. Positions Val-220–Pro-326 constitute an AB hydrolase-1 domain. His-224 is an active-site residue. The active-site Nucleophile is the Ser-297. Residues Asp-446 and His-474 each act as charge relay system in the active site.

It is found in the cell membrane. Its subcellular location is the secreted. The protein resides in the cell wall. Functionally, involved in cuticle development and morphogenesis. The protein is Probable lysophospholipase BODYGUARD 3 of Arabidopsis thaliana (Mouse-ear cress).